The sequence spans 492 residues: MATETLDKQKTIDLRKKHVGPSCKVFFDHDPIKIVRAKGQYMYNEKDEKYLDCINNVAHVGHCHPDVVSAGAKQMELLNTNSRFLHDSLVLYAQRLQATLPEKLSVCYFVNSGSEANDLALRLAWQYTGHKDIITLDNAYHGHVSSLIDISPYKFHQMAGAEPSQHVHVALSPDTYRGKYREDHPDPATAYAENVKEVIEEAHKKGHEIAAFIAESLQSCGGQVIPPMGYFQKVAQHVRNAGGIFIADEVQVGFGRVGTHFWGFQLQGEDFVPDIVTMGKPIGNGHPMSCVITSREIAESFMSSGMEYFNTFGGNPVSCAIGLAVLNVIEKEDLQGNALHVGGYLTQLLEDLKKRHPLVGDVRGRGLFVGLELVRNQSKRTPATAEAQEVIYRLKEQRILLSADGPHRNVLKFKPPMCFSREDAEFAVEKIDQILTDLEKAMVLQRPEAAILETGHIKRKDASDENGLVHPSNGNSHKHTSTIPLSKKTKRN.

K280 bears the N6-(pyridoxal phosphate)lysine mark. A disordered region spans residues 462–492 (ASDENGLVHPSNGNSHKHTSTIPLSKKTKRN).

Belongs to the class-III pyridoxal-phosphate-dependent aminotransferase family. In terms of assembly, homotetramer. Pyridoxal 5'-phosphate serves as cofactor.

Its subcellular location is the mitochondrion. The catalysed reaction is phosphoethanolamine + H2O = acetaldehyde + NH4(+) + phosphate. In terms of biological role, catalyzes the pyridoxal-phosphate-dependent breakdown of phosphoethanolamine, converting it to ammonia, inorganic phosphate and acetaldehyde. The sequence is that of Ethanolamine-phosphate phospho-lyase (etnppl) from Danio rerio (Zebrafish).